Here is a 351-residue protein sequence, read N- to C-terminus: Phosphoribosylformylglycinamidine cyclo-ligase (351 aa).

Belongs to the AIR synthase family.

It localises to the cytoplasm. The enzyme catalyses 2-formamido-N(1)-(5-O-phospho-beta-D-ribosyl)acetamidine + ATP = 5-amino-1-(5-phospho-beta-D-ribosyl)imidazole + ADP + phosphate + H(+). It functions in the pathway purine metabolism; IMP biosynthesis via de novo pathway; 5-amino-1-(5-phospho-D-ribosyl)imidazole from N(2)-formyl-N(1)-(5-phospho-D-ribosyl)glycinamide: step 2/2. In Burkholderia ambifaria (strain ATCC BAA-244 / DSM 16087 / CCUG 44356 / LMG 19182 / AMMD) (Burkholderia cepacia (strain AMMD)), this protein is Phosphoribosylformylglycinamidine cyclo-ligase.